Reading from the N-terminus, the 269-residue chain is Tryptophan synthase alpha chain (269 aa).

Active-site proton acceptor residues include Glu-49 and Asp-60.

Belongs to the TrpA family. As to quaternary structure, tetramer of two alpha and two beta chains.

The enzyme catalyses (1S,2R)-1-C-(indol-3-yl)glycerol 3-phosphate + L-serine = D-glyceraldehyde 3-phosphate + L-tryptophan + H2O. It functions in the pathway amino-acid biosynthesis; L-tryptophan biosynthesis; L-tryptophan from chorismate: step 5/5. Its function is as follows. The alpha subunit is responsible for the aldol cleavage of indoleglycerol phosphate to indole and glyceraldehyde 3-phosphate. The sequence is that of Tryptophan synthase alpha chain from Histophilus somni (strain 2336) (Haemophilus somnus).